We begin with the raw amino-acid sequence, 217 residues long: N-(5'-phosphoribosyl)anthranilate isomerase (217 aa).

It belongs to the TrpF family.

It carries out the reaction N-(5-phospho-beta-D-ribosyl)anthranilate = 1-(2-carboxyphenylamino)-1-deoxy-D-ribulose 5-phosphate. The protein operates within amino-acid biosynthesis; L-tryptophan biosynthesis; L-tryptophan from chorismate: step 3/5. The polypeptide is N-(5'-phosphoribosyl)anthranilate isomerase (Chlorobium phaeobacteroides (strain BS1)).